The following is a 394-amino-acid chain: Xylose isomerase (394 aa).

Active-site residues include His54 and Asp57. Glu181, Glu217, His220, Asp245, Asp255, Asp257, and Asp292 together coordinate Mg(2+).

Belongs to the xylose isomerase family. As to quaternary structure, homotetramer. Requires Mg(2+) as cofactor.

The protein localises to the cytoplasm. The enzyme catalyses alpha-D-xylose = alpha-D-xylulofuranose. The sequence is that of Xylose isomerase (xylA) from Actinoplanes sp. (strain ATCC 31351 / 3876) (Ampullariella sp.).